A 248-amino-acid polypeptide reads, in one-letter code: Probable phosphatase VF_A0065 (248 aa).

Positions 8, 10, 16, 41, 74, 102, 132, 194, and 196 each coordinate Zn(2+).

This sequence belongs to the PHP family. The cofactor is Zn(2+).

The chain is Probable phosphatase VF_A0065 from Aliivibrio fischeri (strain ATCC 700601 / ES114) (Vibrio fischeri).